The following is a 482-amino-acid chain: MTILNIAAVDLGASSGRVMLASYSTENHKISLEEIHRFKNQFVSQNGHECWDLAYLENEIVNGLRKISNSGRTLHSIGIDTWGVDYVLLDQNGEVVGPTYAYRDHRTDGVMQKVQAELGKEVIYRKTGIQFLTFNTLYQLKAMTDENPAWLSQVKDFVMIPDYLNYRLTGVINREYTNATTTQLVNVNIDSWDTALLDYLGLPASWFGRIRHPGHQVGLWENRVPVMSVASHDTASAVISAPLSDENAAYLCSGTWSLMGLDTTTPCTDECAMNANITNEGGIDGHYRVLKNIMGLWLFNRLCTERDVTDIPALVKQAEAELPFQSLINPNAECFLNPSSMVEAIQQYCREHNQVIPKTTAQLARCIFDSLAMLYRKVALELAGLQGKPISALHIVGGGSQNAFLNQLCADLCGIDVFAGPVEASVLGNVGCQLMALDQIHNAAEFRQLVVKNFPLKQFKKRPHFMPASDFEEKWCEFCALN.

13 to 17 contributes to the ATP binding site; the sequence is ASSGR. Residues glycine 83 and 232–234 each bind substrate; that span reads HDT. Residue aspartate 233 is the Proton acceptor of the active site. Residue threonine 255 coordinates ATP. Asparagine 292 provides a ligand contact to substrate. Asparagine 300 contributes to the ATP binding site. A disulfide bridge links cysteine 349 with cysteine 366. Glycine 398 is an ATP binding site. A disulfide bridge links cysteine 409 with cysteine 413.

The protein belongs to the rhamnulokinase family. Mg(2+) serves as cofactor.

It carries out the reaction L-rhamnulose + ATP = L-rhamnulose 1-phosphate + ADP + H(+). It participates in carbohydrate degradation; L-rhamnose degradation; glycerone phosphate from L-rhamnose: step 2/3. Functionally, involved in the catabolism of L-rhamnose (6-deoxy-L-mannose). Catalyzes the transfer of the gamma-phosphate group from ATP to the 1-hydroxyl group of L-rhamnulose to yield L-rhamnulose 1-phosphate. The chain is Rhamnulokinase from Mannheimia succiniciproducens (strain KCTC 0769BP / MBEL55E).